Here is a 273-residue protein sequence, read N- to C-terminus: Type II pantothenate kinase (273 aa).

D8–K15 contributes to the ATP binding site. E76 functions as the Proton acceptor in the catalytic mechanism. Residues T105, G127–M131, F143, and S230 contribute to the ATP site.

The protein belongs to the type II pantothenate kinase family. Homodimer.

Its subcellular location is the cytoplasm. The catalysed reaction is (R)-pantothenate + ATP = (R)-4'-phosphopantothenate + ADP + H(+). Its pathway is cofactor biosynthesis; coenzyme A biosynthesis; CoA from (R)-pantothenate: step 1/5. In terms of biological role, catalyzes the phosphorylation of pantothenate (Pan), the first step in CoA biosynthesis. The polypeptide is Type II pantothenate kinase (Bacillus cereus (strain ATCC 14579 / DSM 31 / CCUG 7414 / JCM 2152 / NBRC 15305 / NCIMB 9373 / NCTC 2599 / NRRL B-3711)).